The sequence spans 495 residues: Neuronal acetylcholine receptor subunit alpha-3 (495 aa).

An N-terminal signal peptide occupies residues 1–21; it reads MARRSRLRRLLLLLLLPVAST. Residues 22–240 lie on the Extracellular side of the membrane; that stretch reads SDAEHRLFER…PLFYTINLII (219 aa). N-linked (GlcNAc...) asparagine glycosylation is found at Asn45 and Asn162. 2 disulfide bridges follow: Cys149–Cys163 and Cys213–Cys214. A helical transmembrane segment spans residues 241–256; the sequence is PCLLISFLTVLVFYLP. Residues 257–258 lie on the Cytoplasmic side of the membrane; that stretch reads SD. A helical membrane pass occupies residues 259–275; sequence CGEKVTLCISVLLSLTV. Glu261 provides a ligand contact to Na(+). Over 276–297 the chain is Extracellular; sequence FLLVITETIPSTSLVIPLIGEY. The chain crosses the membrane as a helical span at residues 298–316; it reads LLFTMIFVTLSIVITVFVL. Residues 317–464 lie on the Cytoplasmic side of the membrane; the sequence is NVHYRTPTTH…QDDWKYVAMV (148 aa). A phosphoserine mark is found at Ser403 and Ser406. Residues 465–483 traverse the membrane as a helical segment; it reads IDRIFLWVFILVCILGTAG. The Extracellular portion of the chain corresponds to 484-495; that stretch reads LFLQPLMTRDDA.

It belongs to the ligand-gated ion channel (TC 1.A.9) family. Acetylcholine receptor (TC 1.A.9.1) subfamily. Alpha-3/CHRNA3 sub-subfamily. Neuronal AChR is composed of two different types of subunits: alpha and beta. CHRNA3/Alpha-3 subunit can be combined to CHRNB2/beta-2 or CHRNB4/beta-4 to give rise to functional receptors. Part of a complex composed of STUB1/CHIP, VCP/p97, CHRNA3, and UBXN2A that modulates the ubiquitination and endoplasmic reticulum-associated degradation (ERAD) of CHRNA3. Within the complex UBXN2A acts as a scaffold protein required for the interaction of CHRNA3 with VCP/p97, this interaction also inhibits CHRNA3 ubiquitination by STUB1/CHIP and subsequently ERAD. Interacts with UBXN2A (via SEP domain), the interaction is required for the interaction of CHRNA3 in the STUB1:VCP:UBXN2A complex. Interacts with RIC3; which is required for proper folding and assembly. Interacts with LYPD6. Post-translationally, ubiquitinated; by STUB1/CHIP and thereafter degraded by the 26S proteosome complex.

The protein localises to the synaptic cell membrane. It localises to the cell membrane. The protein resides in the endoplasmic reticulum. It is found in the golgi apparatus. The catalysed reaction is K(+)(in) = K(+)(out). It carries out the reaction Na(+)(in) = Na(+)(out). It catalyses the reaction Ca(2+)(in) = Ca(2+)(out). Activated by a myriad of ligands such as acetylcholine, cytisine, nicotine, choline and epibatidine. The heteropentamer CHRNA3:CHRNB2 activity is blocked by alpha-conotoxins ImI, ImII, PnIA, GID and MII. The heteropentamer CHRNA3:CHRNB4 activity is blocked by the alpha-conotoxin ImI and AuIB. Component of neuronal acetylcholine receptors (nAChRs) that function as pentameric, ligand-gated cation channels with high calcium permeability among other activities. nAChRs are excitatory neurotrasnmitter receptors formed by a collection of nAChR subunits known to mediate synaptic transmission in the nervous system and the neuromuscular junction. Each nAchR subunit confers differential attributes to channel properties, including activation, deactivation and desensitization kinetics, pH sensitivity, cation permeability, and binding to allosteric modulators. CHRNA3 forms heteropentameric neuronal acetylcholine receptors with CHRNB2 and CHRNB4. CHRNA3:CHRNB4 being predominant in neurons of the autonomic ganglia, it is known as ganglionic nicotinic receptor. CHRNA3:CHRNB4 also plays an important role in the habenulo-interpeduncular tract, modulating the mesolimbic dopamine system and affecting reward circuits and addiction. Hypothalamic CHRNA3:CHRNB4 nAChR activation by nicotine leads to activation of POMC neurons and a decrease in food intake. Also expressed in the urothelium where it modulates reflex bladder activity by increasing intracellular calcium through extracellular influx and basal ATP release. This chain is Neuronal acetylcholine receptor subunit alpha-3 (CHRNA3), found in Bos taurus (Bovine).